Consider the following 599-residue polypeptide: NADH-quinone oxidoreductase subunit C/D (599 aa).

Positions 1–189 (MTDLTTHDLA…DPFELTKQKE (189 aa)) are NADH dehydrogenase I subunit C. The segment at 213–599 (DFMFLNLGPN…IDFVMSDVDR (387 aa)) is NADH dehydrogenase I subunit D.

In the N-terminal section; belongs to the complex I 30 kDa subunit family. The protein in the C-terminal section; belongs to the complex I 49 kDa subunit family. As to quaternary structure, NDH-1 is composed of 13 different subunits. Subunits NuoB, CD, E, F, and G constitute the peripheral sector of the complex.

It localises to the cell inner membrane. It catalyses the reaction a quinone + NADH + 5 H(+)(in) = a quinol + NAD(+) + 4 H(+)(out). NDH-1 shuttles electrons from NADH, via FMN and iron-sulfur (Fe-S) centers, to quinones in the respiratory chain. The immediate electron acceptor for the enzyme in this species is believed to be ubiquinone. Couples the redox reaction to proton translocation (for every two electrons transferred, four hydrogen ions are translocated across the cytoplasmic membrane), and thus conserves the redox energy in a proton gradient. In Pectobacterium atrosepticum (strain SCRI 1043 / ATCC BAA-672) (Erwinia carotovora subsp. atroseptica), this protein is NADH-quinone oxidoreductase subunit C/D.